The chain runs to 82 residues: Putative membrane protein insertion efficiency factor (82 aa).

The protein belongs to the UPF0161 family.

It is found in the cell membrane. Functionally, could be involved in insertion of integral membrane proteins into the membrane. In Streptococcus uberis (strain ATCC BAA-854 / 0140J), this protein is Putative membrane protein insertion efficiency factor.